A 408-amino-acid polypeptide reads, in one-letter code: Methyltransferase/ribosomally synthesized type I borosin cyclic peptide precursor sveMA (408 aa).

The segment at 1–250 (MASSTHPKRG…TSSTFYIPPR (250 aa)) is methyltransferase domain. Active-site residues include R73, Y77, and Y99. S-adenosyl-L-methionine is bound by residues Y99, H101, I104, A131, Q173, G211, S242, and T244. Residues 251–375 (DSEAIDYDMV…GSVYKVMSAT (125 aa)) form a clasp domain region. The segment at 371–385 (VMSATQADIELGKEP) is precursor leader. V401 bears the N-methylvaline mark. An N-methylisoleucine modification is found at I402. V406 is modified (N-methylvaline).

The protein in the N-terminal section; belongs to the precorrin methyltransferase family. In terms of assembly, homodimer. In terms of processing, sveMA automethylates at Val-401, Ile-402 and Val-406 before being processed by a prolyloligopeptidase which likely forms a peptidyl ester upon removal of the follower propeptide, which then undergoes macrocyclization with the N-terminus of the modified core peptide. Peptide backbone alpha-N-methylations change the physicochemical properties of amide bonds to provide structural constraints and other favorable characteristics including biological membrane permeability to peptides.

Its pathway is secondary metabolite biosynthesis. In terms of biological role, fusion protein of the methyltransferase sveM and a type I borosin core peptide; part of the gene cluster that mediates the biosynthesis of a type I borosin, a highly methylated cyclic peptide with potent biological activities. Type I borosins derive from the C-terminus of the fusion protein, and it is the same protein that methylates its own C-terminus using S-adenosyl methionine (SAM). The C-terminus is subsequently cleaved off and macrocyclized by a prolyloligopeptidase to give the final product. The protein is Methyltransferase/ribosomally synthesized type I borosin cyclic peptide precursor sveMA of Serendipita vermifera subsp. bescii (Mycorrhizal fungus).